The sequence spans 1205 residues: U2 snRNP component prp10 (1205 aa).

Disordered regions lie at residues 39-58, 122-175, and 202-254; these read QKEAAKNSSTNGSVNIEGTQ, YADE…GRSY, and GTLK…RRSR. The segment covering 44–58 has biased composition (polar residues); it reads KNSSTNGSVNIEGTQ. Residues 130 to 153 show a composition bias toward basic and acidic residues; the sequence is MQERQSKKQIQDRESDYQKQRYDR. HEAT repeat units lie at residues 393 to 429, 431 to 473, 475 to 505, 506 to 540, 541 to 578, 582 to 619, 665 to 702, 745 to 782, 828 to 865, 912 to 949, 954 to 991, 993 to 1024, 1025 to 1061, 1065 to 1102, 1107 to 1142, and 1143 to 1179; these read LRERKILRLLLKVKNGTPPMRKSALRQLTDQARDFGA, ALFN…PFTH, ILVVIEPLLIDEDYYARAEGREIISNLAKAS, GLAHMIATMRPDIDHVDEYVRNTTARAFSVVASAL, GVPALLPFLKAVCRSKKSWQARHTGVRIIQQIALLLGC, PHLKNLVDCIGHGLEDEQQKVRIMTALSLSALAEAATP, HFTRRIMKILLREFNSPDEEMKKIVLKVVSQCASTDGV, VGSRQIVERVVNNFKDESEPYRKMTAETVDKVIGSLGV, PYLPQIVSTILYRLNNKSANVREQAADLVSSITIVLKA, PPIRDLLPRLTPILRNRHEKVQENTIDLVGKIADRGSE, REWMRICFELIDMLKAHKKSIRRAAVNTFGYISKAIGP, DVLATLLNNLKVQERQNRVCTTVAIAIVAETC, MPFTVVPALMADYRTPEMNVQNGVLKSLAFMFEYIGE, DYVYAITPLLADALMDRDAVHRQTAASVIKHLSLGCVG, DAMIHLLNILWPNILEESPHVINAVREGIDGIRNCI, and GVGPIMAYLVQGLFHPSRKVRNTYWTSYNSAYVQSAD.

This sequence belongs to the SF3B1 family. In terms of assembly, belongs to the 40S cdc5-associated complex (or cwf complex), a spliceosome sub-complex reminiscent of a late-stage spliceosome composed of the U2, U5 and U6 snRNAs and at least brr2, cdc5, cwf2/prp3, cwf3/syf1, cwf4/syf3, cwf5/ecm2, spp42/cwf6, cwf7/spf27, cwf8, cwf9, cwf10, cwf11, cwf12, prp45/cwf13, cwf14, cwf15, cwf16, cwf17, cwf18, cwf19, cwf20, cwf21, cwf22, cwf23, cwf24, cwf25, cwf26, cyp7/cwf27, cwf28, cwf29/ist3, lea1, msl1, prp5/cwf1, prp10, prp12/sap130, prp17, prp22, sap61, sap62, sap114, sap145, slu7, smb1, smd1, smd3, smf1, smg1 and syf2.

Its subcellular location is the nucleus. Its function is as follows. Contacts pre-mRNA on both sides of the branch site early in spliceosome assembly. This Schizosaccharomyces pombe (strain 972 / ATCC 24843) (Fission yeast) protein is U2 snRNP component prp10 (prp10).